We begin with the raw amino-acid sequence, 214 residues long: Melanoregulin (214 aa).

A Cholesterol-binding sequence motif motif is present at residues 162 to 172 (LSERYLLVVDR). At S213 the chain carries Phosphoserine.

Belongs to the melanoregulin family. In terms of assembly, identified in a complex with RILP and DCTN1; interacts directly with RILP, but does not interact directly with DCTN1. Interacts with PRPH2. Palmitoylated. Palmitoylation is required to maintain the protein at the melanosome membrane. Detected in melanocytes. Expressed in retina, in retinal pigment epithelium (at protein level). Widely expressed with higher expression in skin, heart, liver, testis and thymus. Detected in retina, in retinal pigment epithelium cells.

It is found in the apical cell membrane. It localises to the melanosome membrane. The protein localises to the lysosome membrane. Its subcellular location is the cytoplasmic vesicle membrane. Its function is as follows. Probably functions as a cargo-recognition protein that couples cytoplasmic vesicles to the transport machinery. Plays a role in hair pigmentation, a process that involves shedding of melanosome-containing vesicles from melanocytes, followed by phagocytosis of the melanosome-containing vesicles by keratinocytes. Functions on melanosomes as receptor for RILP and the complex formed by RILP and DCTN1, and thereby contributes to retrograde melanosome transport from the cell periphery to the center. Overexpression causes accumulation of late endosomes and/or lysosomes at the microtubule organising center (MTOC) at the center of the cell. Probably binds cholesterol and requires the presence of cholesterol in membranes to function in microtubule-mediated retrograde organelle transport. Binds phosphatidylinositol 3-phosphate, phosphatidylinositol 4-phosphate, phosphatidylinositol 5-phosphate and phosphatidylinositol 3,5-bisphosphate, but not phosphatidylinositol 3,4-bisphosphate or phosphatidylinositol 4,5-bisphosphate. Required for normal phagosome clearing and normal activation of lysosomal enzymes in lysosomes from retinal pigment epithelium cells. Required for normal degradation of the lipofuscin component N-retinylidene-N-retinylethanolamine (A2E) in the eye. May function in membrane fusion and regulate the biogenesis of disk membranes of photoreceptor rod cells. This is Melanoregulin (Mreg) from Mus musculus (Mouse).